A 224-amino-acid chain; its full sequence is Large ribosomal subunit protein uL1m (224 aa).

This sequence belongs to the universal ribosomal protein uL1 family.

It is found in the mitochondrion. The polypeptide is Large ribosomal subunit protein uL1m (RPL1) (Reclinomonas americana).